Consider the following 393-residue polypeptide: Isocitrate dehydrogenase [NAD] subunit gamma 1, mitochondrial (393 aa).

The N-terminal 39 residues, 1 to 39 (MALKVAIAAGSAAKAIFKPALLCRPWEVLAAHEAPRRSI), are a transit peptide targeting the mitochondrion. Citrate is bound at residue T120. Phosphoserine is present on S130. Residue N133 coordinates citrate. The substrate site is built by R136 and R167. N6-acetyllysine is present on K206. K226 carries the N6-succinyllysine modification. D254 lines the substrate pocket. D254 contacts Mn(2+). Residues N312, T313, and N324 each coordinate ADP.

This sequence belongs to the isocitrate and isopropylmalate dehydrogenases family. In terms of assembly, heterooligomer of subunits alpha (IDH3A), beta (IDH3B), and gamma (IDH3G) in the apparent ratio of 2:1:1. The heterodimer containing one IDH3A and one IDH3B subunit and the heterodimer containing one IDH3A and one IDH3G subunit assemble into a heterotetramer (which contains two subunits of IDH3A, one of IDH3B and one of IDH3G) and further into the heterooctamer. Mg(2+) is required as a cofactor. It depends on Mn(2+) as a cofactor.

Its subcellular location is the mitochondrion. With respect to regulation, the heterotetramer and the heterodimer composed of IDH3A and IDH3G subunits can be allosterically activated by citrate (CIT) or/and ADP, and the two activators can act independently or synergistically. The heterodimer composed of IDH3A and IDH3B subunits cannot be allosterically regulated and the allosteric regulation of the heterotetramer is through the IDH3G subunit and not the IDH3B subunit. The IDH3G subunit contains the allosteric site which consists of a CIT-binding site and an ADP-binding site, and the binding of CIT and ADP causes conformational changes at the allosteric site which are transmitted to the active site in the catalytic subunit (IDH3A) through a cascade of conformational changes at the heterodimer interface, leading to stabilization of the isocitrate-binding at the active site and thus activation of the enzyme. ATP can activate the heterotetramer and the heterodimer composed of IDH3A and IDH3G subunits at low concentrations but inhibits their activities at high concentrations, whereas ATP exhibits only inhibitory effect on the heterodimer composed of IDH3A and IDH3B subunits. Regulatory subunit which plays a role in the allosteric regulation of the enzyme catalyzing the decarboxylation of isocitrate (ICT) into alpha-ketoglutarate. The heterodimer composed of the alpha (IDH3A) and beta (IDH3B) subunits and the heterodimer composed of the alpha (IDH3A) and gamma (IDH3G) subunits, have considerable basal activity but the full activity of the heterotetramer (containing two subunits of IDH3A, one of IDH3B and one of IDH3G) requires the assembly and cooperative function of both heterodimers. The chain is Isocitrate dehydrogenase [NAD] subunit gamma 1, mitochondrial (Idh3g) from Rattus norvegicus (Rat).